Here is a 518-residue protein sequence, read N- to C-terminus: MAAAPPAVAVNGGGMAAAKVASQAYLESKAVKDTRVLIADLCKQFYTLGWVSGTGGSITIKAHDDSIPKRQQLILMSPSGVQKERMEPEDMYVLATNGSILSSPSPKPYPYKPPKCSDCAPLFLKAYDMRNAGAVIHSHGMESCLVTMINPLSKEFRITHMEMIKGIQGHGYYDELVVPIIENTAYENELTDSLAKAIEAYPKTTAVLVRNHGIYIWGDSWISAKTQAECYHYLFDAAIKLHQIGLDWSTPNHGPIQNVKVKAGMNNSNNRIEPLPRCIVLDIEGTTTPITFVADVLFPYARDNVGRHLSATYDTAETKDDINLLRTQVEDDLAQGVDGAIPIPTDDAGKEEVIAALVANVEAMIKADRKITALKQLQGHIWRTGYENNELEGVVYDDVPEALEKWHALGIKVYIYSSGSRLAQRLIFGKTNYGDLRKYLSGFFDTTVGNKKETRSYIEISESLGVDKPSDILFVTDVFQEAFAAKGAGLDVMISIRPGNAPLPENHGFKTITSFAEI.

The segment at 1–247 (MAAAPPAVAV…AIKLHQIGLD (247 aa)) is methylthioribulose-1-phosphate dehydratase. Substrate is bound at residue Cys119. Residues His137 and His139 each coordinate Zn(2+). The Proton donor/acceptor; for methylthioribulose-1-phosphate dehydratase activity role is filled by Glu162. His212 contributes to the Zn(2+) binding site. The tract at residues 279 to 518 (IVLDIEGTTT…FKTITSFAEI (240 aa)) is enolase-phosphatase E1. Residues Asp282 and Glu284 each contribute to the Mg(2+) site. Residues 417–418 (SS) and Lys451 contribute to the substrate site. Asp477 lines the Mg(2+) pocket.

This sequence in the N-terminal section; belongs to the aldolase class II family. MtnB subfamily. The protein in the C-terminal section; belongs to the HAD-like hydrolase superfamily. MasA/MtnC family. It depends on Zn(2+) as a cofactor. Requires Mg(2+) as cofactor.

The catalysed reaction is 5-(methylsulfanyl)-D-ribulose 1-phosphate = 5-methylsulfanyl-2,3-dioxopentyl phosphate + H2O. The enzyme catalyses 5-methylsulfanyl-2,3-dioxopentyl phosphate + H2O = 1,2-dihydroxy-5-(methylsulfanyl)pent-1-en-3-one + phosphate. It functions in the pathway amino-acid biosynthesis; L-methionine biosynthesis via salvage pathway; L-methionine from S-methyl-5-thio-alpha-D-ribose 1-phosphate: step 2/6. Its pathway is amino-acid biosynthesis; L-methionine biosynthesis via salvage pathway; L-methionine from S-methyl-5-thio-alpha-D-ribose 1-phosphate: step 3/6. It participates in amino-acid biosynthesis; L-methionine biosynthesis via salvage pathway; L-methionine from S-methyl-5-thio-alpha-D-ribose 1-phosphate: step 4/6. The chain is Probable bifunctional methylthioribulose-1-phosphate dehydratase/enolase-phosphatase E1 from Populus trichocarpa (Western balsam poplar).